The following is a 427-amino-acid chain: Glutamate-1-semialdehyde 2,1-aminomutase (427 aa).

An N6-(pyridoxal phosphate)lysine modification is found at Lys266.

Belongs to the class-III pyridoxal-phosphate-dependent aminotransferase family. HemL subfamily. Homodimer. Requires pyridoxal 5'-phosphate as cofactor.

The protein localises to the cytoplasm. The enzyme catalyses (S)-4-amino-5-oxopentanoate = 5-aminolevulinate. The protein operates within porphyrin-containing compound metabolism; protoporphyrin-IX biosynthesis; 5-aminolevulinate from L-glutamyl-tRNA(Glu): step 2/2. The protein is Glutamate-1-semialdehyde 2,1-aminomutase of Dechloromonas aromatica (strain RCB).